A 680-amino-acid chain; its full sequence is Leucine-rich repeat and calponin homology domain-containing protein 4 (680 aa).

Low complexity predominate over residues 1-22 (MAAAVAGPLAAGGEEAAASVSL). Residues 1–35 (MAAAVAGPLAAGGEEAAASVSLPGSPGLPGSRSAE) are disordered. 9 LRR repeats span residues 41 to 64 (AVATGTLNLSNRRLKHFPRGAARS), 67 to 90 (LSDITQADLSRNRFPEVPEAACQL), 92 to 113 (SLEGLSLYHNCLKCLNPALGNL), 114 to 136 (TALTYLNLSRNQLSSLPPYICQL), 138 to 158 (LRVLIISNNKLGALPPDISTL), 159 to 181 (GSLRQLDVSSNELQSLPVELCSL), 182 to 204 (RSLRDLNVRRNQLSTLPDELGDL), 206 to 226 (LVRLDFSCNRISRIPVSFCRL), and 227 to 250 (RHLQVVLLDSNPLQSPPAQICLKG). 6 positions are modified to phosphoserine: Ser279, Ser281, Ser304, Ser307, Ser309, and Ser313. Residues 329–528 (SELARDPRGP…PSSPESVLRP (200 aa)) form a disordered region. Positions 330–345 (ELARDPRGPRQPREDG) are enriched in basic and acidic residues. The span at 346–355 (AGDGDLEQID) shows a compositional bias: acidic residues. 2 stretches are compositionally biased toward basic and acidic residues: residues 357–371 (IDSHVPGEDEDRSAA) and 385–418 (DVEKPSSSRREEPAGEERRRPDTLQLWQERERKQ). Residue Ser432 is modified to Phosphoserine. 2 stretches are compositionally biased toward low complexity: residues 440–453 (AAGAGASAPSTQAT) and 510–528 (RSSSQSGSSPSSPESVLRP). Phosphoserine occurs at positions 511, 513, 517, 521, and 586. Residues 531-644 (FPQEKELISQ…VLEAVILVGG (114 aa)) form the Calponin-homology (CH) domain. A helical transmembrane segment spans residues 655–675 (GLGGFLLFYVVFMLLLYVVYT).

In terms of tissue distribution, widely expressed across tissues, with the most abundant expression in spleen, testes, thymus, intestine, and blood. Expressed in macrophages.

It localises to the cell membrane. Its function is as follows. Accessory protein that regulates signaling by multiple TLRs, acting as a broad-spanning regulator of the innate immune response. In macrophages, binds LPS and promotes proper docking of LPS in lipid raft membrane. May be required for lipid raft maintenance. This is Leucine-rich repeat and calponin homology domain-containing protein 4 (Lrch4) from Mus musculus (Mouse).